We begin with the raw amino-acid sequence, 445 residues long: Probable D-serine dehydratase (445 aa).

N6-(pyridoxal phosphate)lysine is present on Lys-111.

It belongs to the serine/threonine dehydratase family. DsdA subfamily. Pyridoxal 5'-phosphate serves as cofactor.

The enzyme catalyses D-serine = pyruvate + NH4(+). This Burkholderia pseudomallei (strain 1710b) protein is Probable D-serine dehydratase.